A 1057-amino-acid chain; its full sequence is MPKRNDIKTILVIGSGPIIIGQAAEFDYAGTQACLALKEEGYRVILVNSNPATIMTDKEIADKVYIEPLTHDFIARIIRKEQPDALLPTLGGQTGLNMAIQLHESGVLQDNNVQLLGTELTSIQQAEDREMFRTLMNYLNVPVPESDIVNTVEQAFKFKEQVGYPLIVRPAFTMGGTGGGICHNDEELHEIVSNGLHYSPATQCLLEKSIAGFKEIEYEVMRDKNDNAIVVCNMENIDPVGIHTGDSIVVAPSQTLSDVEYQMLRDVSLKVIRALGIEGGCNVQLALDPHSFDYYIIEVNPRVSRSSALASKATGYPIAKLAAKIAVGLTLDEMLNPITGTSYATFEPTLDYVISKIPRFPFDKFEKGERELGTQMKATGEVMAIGRTYEESLLKAIRSLEYGVHHLGLPNGESFDLDYIKERISHQDDERLFFIGEAIRRGTTLEEIHNMTQIDYFFLHKFQNIIDIEHQLKEHQGDLEYLKYAKDYGFSDKTIAHRFNMTEEEVYQLRMENDIKPVYKMVDTCAAEFESSTPYYYGTYETENESIITDKEKILVLGSGPIRIGQGVEFDYATVHAVWAIQKAGYEAIIVNNNPETVSTDFSISDKLYFEPLTEEDVMNIINLEKPKGVVVQFGGQTAINLADKLAKHGVKILGTSLENLNRAEDRKEFEALLRKINVPQPQGKTATSPEEALANAAEIGYPVVVRPSYVLGGRAMEIVDNDKELENYMTQAVKASPEHPVLVDRYLTGKEIEVDAICDGETVIIPGIMEHIERAGVHSGDSIAVYPPQTLTEDELTTLEDYTIKLAKGLNIIGLINIQFVIAHDGVYVLEVNPRSSRTVPFLSKITDIPMAQLAMRAIIGEKLTDMGYQEGVQPYAEGVFVKAPVFSFNKLKNVDITLGPEMKSTGEVMGKDTTLEKALFKGLTGSGVEVKDHGTVLMTVSDKDKEEVVKLAQRLNEVGYKILATSGTANKLAEYDIPAEVVGKIGGENDLLTRIQNGDVQIVINTMTKGKEVERDGFQIRRTTVENGIPCLTSLDTANALTNVIESMTFTMRQM.

The tract at residues 1–401 (MPKRNDIKTI…SLLKAIRSLE (401 aa)) is carboxyphosphate synthetic domain. Residues Arg129, Arg169, Gly175, Gly176, Lys208, Ile210, Glu215, Gly241, Ile242, His243, Gln284, and Glu298 each coordinate ATP. The ATP-grasp 1 domain maps to 133 to 327 (RTLMNYLNVP…IAKLAAKIAV (195 aa)). Gln284, Glu298, and Asn300 together coordinate Mg(2+). The Mn(2+) site is built by Gln284, Glu298, and Asn300. The oligomerization domain stretch occupies residues 402-546 (YGVHHLGLPN…YGTYETENES (145 aa)). Residues 547–929 (IITDKEKILV…ALFKGLTGSG (383 aa)) form a carbamoyl phosphate synthetic domain region. Residues 671–861 (EALLRKINVP…MAQLAMRAII (191 aa)) form the ATP-grasp 2 domain. Residues Arg707, Arg746, Leu748, Glu752, Gly777, Val778, His779, Ser780, Gln820, and Glu832 each contribute to the ATP site. Gln820, Glu832, and Asn834 together coordinate Mg(2+). Residues Gln820, Glu832, and Asn834 each coordinate Mn(2+). Residues 930-1057 (VEVKDHGTVL…ESMTFTMRQM (128 aa)) enclose the MGS-like domain. The allosteric domain stretch occupies residues 930 to 1057 (VEVKDHGTVL…ESMTFTMRQM (128 aa)).

The protein belongs to the CarB family. In terms of assembly, composed of two chains; the small (or glutamine) chain promotes the hydrolysis of glutamine to ammonia, which is used by the large (or ammonia) chain to synthesize carbamoyl phosphate. Tetramer of heterodimers (alpha,beta)4. Mg(2+) serves as cofactor. Requires Mn(2+) as cofactor.

It catalyses the reaction hydrogencarbonate + L-glutamine + 2 ATP + H2O = carbamoyl phosphate + L-glutamate + 2 ADP + phosphate + 2 H(+). The enzyme catalyses hydrogencarbonate + NH4(+) + 2 ATP = carbamoyl phosphate + 2 ADP + phosphate + 2 H(+). The protein operates within amino-acid biosynthesis; L-arginine biosynthesis; carbamoyl phosphate from bicarbonate: step 1/1. Its pathway is pyrimidine metabolism; UMP biosynthesis via de novo pathway; (S)-dihydroorotate from bicarbonate: step 1/3. Large subunit of the glutamine-dependent carbamoyl phosphate synthetase (CPSase). CPSase catalyzes the formation of carbamoyl phosphate from the ammonia moiety of glutamine, carbonate, and phosphate donated by ATP, constituting the first step of 2 biosynthetic pathways, one leading to arginine and/or urea and the other to pyrimidine nucleotides. The large subunit (synthetase) binds the substrates ammonia (free or transferred from glutamine from the small subunit), hydrogencarbonate and ATP and carries out an ATP-coupled ligase reaction, activating hydrogencarbonate by forming carboxy phosphate which reacts with ammonia to form carbamoyl phosphate. The chain is Carbamoyl phosphate synthase large chain from Staphylococcus aureus (strain bovine RF122 / ET3-1).